A 148-amino-acid chain; its full sequence is Small ribosomal subunit protein eS19 (148 aa).

It belongs to the eukaryotic ribosomal protein eS19 family.

The protein is Small ribosomal subunit protein eS19 (rps19) of Dictyostelium discoideum (Social amoeba).